The primary structure comprises 533 residues: Capsid protein VP1 (533 aa).

The tract at residues 333-353 (TIDLQQNPVPQTSSSTTDSPQ) is disordered.

This sequence belongs to the microviridae F protein family.

It is found in the virion. Its subcellular location is the host cytoplasm. Functionally, assembles to form an icosahedral capsid with a T=1 symmetry. The protein is Capsid protein VP1 of Bdellovibrio bacteriovorus (Bacteriophage phiMH2K).